The primary structure comprises 2521 residues: Piezo-type mechanosensitive ion channel component 1 (2521 aa).

The Cytoplasmic portion of the chain corresponds to 1–12; the sequence is MEPHVLGAVLYW. The helical transmembrane segment at 13 to 25 threads the bilayer; the sequence is LLLPCALLAACLL. The Extracellular portion of the chain corresponds to 26 to 28; that stretch reads RFS. The helical transmembrane segment at 29–44 threads the bilayer; that stretch reads GLSLVYLLFLLLLPWF. The Cytoplasmic portion of the chain corresponds to 45 to 58; that stretch reads PGPTRCGLQGHTGR. Residues 59–81 form a helical membrane-spanning segment; that stretch reads LLRALLGLSLLFLVAHLALQICL. Topologically, residues 82–121 are extracellular; the sequence is HIVPRLDQLLGPSCSRWETLSRHIGVTRLDLKDIPNAIRL. The helical transmembrane segment at 122 to 138 threads the bilayer; sequence VAPDLGILVVSSVCLGI. The Cytoplasmic portion of the chain corresponds to 139–194; that stretch reads CGRLARNTRQSPHPRELDDDERDVDASPTAGLQEAATLAPTRRSRLAARFRVTAHW. Residues 195-214 form a helical membrane-spanning segment; the sequence is LLVAAGRVLAVTLLALAGIA. Topologically, residues 215–216 are extracellular; it reads HP. The helical transmembrane segment at 217 to 236 threads the bilayer; the sequence is SALSSVYLLLFLALCTWWAC. Over 237–247 the chain is Cytoplasmic; sequence HFPISTRGFSR. Residues 248-268 traverse the membrane as a helical segment; that stretch reads LCVAVGCFGAGHLICLYCYQM. Topologically, residues 269–309 are extracellular; that stretch reads PLAQALLPPAGIWARVLGLKDFVGPTNCSSPHALVLNTGLD. Asn295 is a glycosylation site (N-linked (GlcNAc...) asparagine). A helical membrane pass occupies residues 310-330; the sequence is WPVYASPGVLLLLCYATASLR. The Cytoplasmic portion of the chain corresponds to 331 to 417; the sequence is KLRAYRPSGQ…EASPLHSLGH (87 aa). Residues 418 to 438 traverse the membrane as a helical segment; it reads LIMDQSYVCALIAMMVWSITY. The Extracellular portion of the chain corresponds to 439 to 440; it reads HS. A helical transmembrane segment spans residues 441-456; sequence WLTFVLLLWACLIWTV. At 457 to 461 the chain is on the cytoplasmic side; that stretch reads RSRHQ. The helical transmembrane segment at 462–484 threads the bilayer; that stretch reads LAMLCSPCILLYGMTLCCLRYVW. Over 485-512 the chain is Extracellular; the sequence is AMDLRPELPTTLGPVSLRQLGLEHTRYP. The helical transmembrane segment at 513-530 threads the bilayer; that stretch reads CLDLGAMLLYTLTFWLLL. The Cytoplasmic segment spans residues 531-574; sequence RQFVKEKLLKWAESPAALTEVTVADTEPTRTQTLLQSLGELVKG. The chain crosses the membrane as a helical span at residues 575 to 595; the sequence is VYAKYWIYVCAGMFIVVSFAG. Residue Arg596 is a topological domain, extracellular. A helical transmembrane segment spans residues 597–617; it reads LVVYKIVYMFLFLLCLTLFQV. The Cytoplasmic portion of the chain corresponds to 618–627; it reads YYSLWRKLLK. The chain crosses the membrane as a helical span at residues 628–649; that stretch reads AFWWLVVAYTMLVLIAVYTFQF. The Extracellular portion of the chain corresponds to 650–679; that stretch reads QDFPAYWRNLTGFTDEQLGDLGLEQFSVSE. The helical transmembrane segment at 680–696 threads the bilayer; sequence LFSSILVPGFFLLACIL. Topologically, residues 697–816 are cytoplasmic; it reads QLHYFHRPFM…RRLLELHVFK (120 aa). Thr734 is subject to Phosphothreonine. Residues 738-769 form a disordered region; that stretch reads REEQQEHQQQQQEEEEEEEDSRDEGLGVATPH. Positions 749–759 are enriched in acidic residues; that stretch reads QEEEEEEEDSR. Ser758 carries the phosphoserine modification. The chain crosses the membrane as a helical span at residues 817–828; that stretch reads LVALYTVWVALK. The Extracellular segment spans residues 829-831; it reads EVS. A helical membrane pass occupies residues 832–845; it reads VMNLLLVVLWAFAL. Residues 846–859 lie on the Cytoplasmic side of the membrane; that stretch reads PYPRFRPMASCLST. A helical membrane pass occupies residues 860 to 874; the sequence is VWTCVIIVCKMLYQL. Residues 875 to 926 lie on the Extracellular side of the membrane; it reads KVVNPQEYSSNCTEPFPNSTNLLPTEISQSLLYRGPVDPANWFGVRKGFPNL. Residues 927 to 954 form a helical membrane-spanning segment; the sequence is GYIQNHLQVLLLLVFEAIVYRRQEHYRR. The Cytoplasmic portion of the chain corresponds to 955-994; sequence QHQLAPLPAQAVFASGTRQQLDQDLLGCLKYFINFFFYKF. A helical membrane pass occupies residues 995-1010; it reads GLEICFLMAVNVIGQR. The Extracellular portion of the chain corresponds to 1011 to 1012; the sequence is MN. A helical membrane pass occupies residues 1013–1028; it reads FLVTLHGCWLVAILTR. Residues 1029–1041 lie on the Cytoplasmic side of the membrane; the sequence is RHRQAIARLWPNY. The chain crosses the membrane as a helical span at residues 1042-1057; the sequence is CLFLALFLLYQYLLCL. At 1058 to 1096 the chain is on the extracellular side; it reads GMPPALCIDYPWRWSRAVPMNSALIKWLYLPDFFRAPNS. The helical transmembrane segment at 1097-1118 threads the bilayer; the sequence is TNLISDFLLLLCASQQWQVFSA. Residues 1119 to 1153 are Cytoplasmic-facing; the sequence is ERTEEWQRMAGVNTDRLEPLRGEPNPVPNFIHCRS. A helical membrane pass occupies residues 1154 to 1180; it reads YLDMLKVAVFRYLFWLVLVVVFVTGAT. The Extracellular portion of the chain corresponds to 1181–1185; it reads RISIF. Residues 1186-1204 traverse the membrane as a helical segment; the sequence is GLGYLLACFYLLLFGTALL. At 1205-1217 the chain is on the cytoplasmic side; it reads QRDTRARLVLWDC. The helical transmembrane segment at 1218–1236 threads the bilayer; sequence LILYNVTVIISKNMLSLLA. Over 1237 to 1285 the chain is Extracellular; the sequence is CVFVEQMQTGFCWVIQLFSLVCTVKGYYDPKEMMDRDQDCLLPVEEAGI. The chain crosses the membrane as a helical span at residues 1286-1302; sequence IWDSVCFFFLLLQRRVF. Over 1303 to 1656 the chain is Cytoplasmic; it reads LSHYYLHVRA…ELLLDRRLRI (354 aa). A coiled-coil region spans residues 1339–1368; sequence HRRIEEKSLAQLKRQMERIRAKQEKHRQGR. 3 disordered regions span residues 1356–1402, 1462–1498, and 1576–1630; these read RIRA…RRQW, RQQEQEQARQEQAGQLPTGGGPSQEVEPAEGPEEAAA, and TLPG…DPGE. Over residues 1385–1398 the composition is skewed to low complexity; that stretch reads LEPGPDSPGGSSPP. Phosphoserine occurs at positions 1391 and 1396. A phosphoserine mark is found at Ser1636 and Ser1646. Residues 1657-1700 traverse the membrane as a helical segment; that stretch reads PELEEAELFAEGQGRALRLLRAVYQCVAAHSELLCYFIIILNHM. Residues 1701–1704 are Extracellular-facing; that stretch reads VTAS. The helical transmembrane segment at 1705 to 1720 threads the bilayer; it reads AGSLVLPVLVFLWAML. Residues 1721-1728 are Cytoplasmic-facing; it reads SIPRPSKR. Residues 1729–1747 traverse the membrane as a helical segment; the sequence is FWMTAIVFTEIAVVVKYLF. At 1748 to 1779 the chain is on the extracellular side; sequence QFGFFPWNSHVVLRRYENKPYFPPRILGLEKT. A helical membrane pass occupies residues 1780-1801; the sequence is DGYIKYDLVQLMALFFHRSQLL. The Cytoplasmic segment spans residues 1802-1960; that stretch reads CYGLWDHEED…HTKYRAATDV (159 aa). Positions 1811-1822 are enriched in basic and acidic residues; that stretch reads DSPSKEHDKSGE. Residues 1811–1921 form a disordered region; it reads DSPSKEHDKS…RPSRSGGRVR (111 aa). Position 1854 is a phosphothreonine (Thr1854). Over residues 1859 to 1868 the composition is skewed to basic and acidic residues; the sequence is VELRPRDTRR. A compositionally biased stretch (basic residues) spans 1869-1878; sequence ISLRFRRRKK. Residues 1890–1903 show a composition bias toward acidic residues; that stretch reads EAEDREEEEGEEEK. Residues 1904 to 1913 are compositionally biased toward basic and acidic residues; sequence EAPTGREKRP. A helical membrane pass occupies residues 1961–1980; the sequence is YALMFLADVVDFIIIIFGFW. At 1981-2000 the chain is on the extracellular side; the sequence is AFGKHSAATDITSSLSDDQV. Residues 2001-2017 form a helical membrane-spanning segment; that stretch reads PEAFLVMLLIQFSTMVV. The Cytoplasmic portion of the chain corresponds to 2018–2031; sequence DRALYLRKTVLGKL. Residues 2032-2052 form a helical membrane-spanning segment; it reads AFQVALVLAIHLWMFFILPAV. The Extracellular segment spans residues 2053-2060; the sequence is TERMFNQN. A helical membrane pass occupies residues 2061–2076; sequence VVAQLWYFVKCIYFAL. At 2077–2176 the chain is on the cytoplasmic side; it reads SAYQIRCGYP…KKKIVKYGMG (100 aa). Residues 2177–2197 traverse the membrane as a helical segment; that stretch reads GLIILFLIAIIWFPLLFMSLV. The Extracellular segment spans residues 2198–2431; sequence RSVVGVVNQP…IFSDKVSPPS (234 aa). A glycan (N-linked (GlcNAc...) asparagine) is linked at Asn2294. A disulfide bridge connects residues Cys2411 and Cys2415. A helical transmembrane segment spans residues 2432–2452; the sequence is LGFLAGYGIMGLYVSIVLVIG. Topologically, residues 2453 to 2521 are cytoplasmic; that stretch reads KFVRGFFSEI…TMIKWTREKE (69 aa).

The protein belongs to the PIEZO (TC 1.A.75) family. As to quaternary structure, homotrimer; the homotrimer forms a propeller-shaped Piezo channel with a cation-ion conducting pore. Heterotrimeric interaction may occur between PIEZO1 and PIEZO2. Interacts with PKD2. Interacts with STOML3. Interacts with TMC1, TMC2, PCDH15 and CIB2; the interaction may be part of the MET complex. Interacts with MDFIC (via C-terminus); the interaction prolongs Piezo channel inactivation. Interacts with MDFI (via C-terminus); the interaction prolongs Piezo channel inactivation. In terms of tissue distribution, expressed in numerous tissues. In normal brain, expressed exclusively in neurons, not in astrocytes. In Alzheimer disease brains, expressed in about half of the activated astrocytes located around classical senile plaques. In Parkinson disease substantia nigra, not detected in melanin-containing neurons nor in activated astrocytes. Expressed in erythrocytes (at protein level). Expressed in myoblasts (at protein level).

Its subcellular location is the endoplasmic reticulum membrane. The protein resides in the endoplasmic reticulum-Golgi intermediate compartment membrane. The protein localises to the cell membrane. It localises to the cell projection. It is found in the lamellipodium membrane. The enzyme catalyses K(+)(in) = K(+)(out). It catalyses the reaction Na(+)(in) = Na(+)(out). It carries out the reaction Ca(2+)(in) = Ca(2+)(out). The catalysed reaction is Mg(2+)(in) = Mg(2+)(out). Its activity is regulated as follows. Regulated by auxillary subunits MDFIC and MDFI. Down-regulated by phosphatidylserines exposed on the cell surface. Divalent ions decrease the single-channel permeability of K(+). Pore-forming subunit of the mechanosensitive non-specific cation Piezo channel required for rapidly adapting mechanically activated (MA) currents and has a key role in sensing touch and tactile pain. Piezo channels are homotrimeric three-blade propeller-shaped structures that utilize a cap-motion and plug-and-latch mechanism to gate their ion-conducting pathways. Generates currents characterized by a linear current-voltage relationship that are sensitive to ruthenium red and gadolinium. Conductance to monovalent alkali ions is highest for K(+), intermediate for Na(+) and lowest for Li(+). Divalent ions except for Mn(2+) permeate the channel but more slowly than the monovalent ions and they also reduce K(+) currents. Plays a key role in epithelial cell adhesion by maintaining integrin activation through R-Ras recruitment to the ER, most probably in its activated state, and subsequent stimulation of calpain signaling. In inner ear hair cells, PIEZO1/2 subunits may constitute part of the mechanotransducer (MET) non-selective cation channel complex where they may act as pore-forming ion-conducting component in the complex. In the kidney, may contribute to the detection of intraluminal pressure changes and to urine flow sensing. Acts as a shear-stress sensor that promotes endothelial cell organization and alignment in the direction of blood flow through calpain activation. Plays a key role in blood vessel formation and vascular structure in both development and adult physiology. Acts as a sensor of phosphatidylserine (PS) flipping at the plasma membrane and governs morphogenesis of muscle cells. In myoblasts, flippase-mediated PS enrichment at the inner leaflet of plasma membrane triggers channel activation and Ca2+ influx followed by Rho GTPases signal transduction, leading to assembly of cortical actomyosin fibers and myotube formation. This is Piezo-type mechanosensitive ion channel component 1 from Homo sapiens (Human).